The following is a 447-amino-acid chain: Tubulin beta-5 chain (447 aa).

8 residues coordinate GTP: Gln-11, Glu-69, Ser-138, Gly-142, Thr-143, Gly-144, Asn-204, and Asn-226. Glu-69 is a binding site for Mg(2+). Positions 424-447 (QYQDATAEEEGEFDEDEELDDAMG) are disordered. Residues 429–447 (TAEEEGEFDEDEELDDAMG) are compositionally biased toward acidic residues.

Belongs to the tubulin family. In terms of assembly, dimer of alpha and beta chains. A typical microtubule is a hollow water-filled tube with an outer diameter of 25 nm and an inner diameter of 15 nM. Alpha-beta heterodimers associate head-to-tail to form protofilaments running lengthwise along the microtubule wall with the beta-tubulin subunit facing the microtubule plus end conferring a structural polarity. Microtubules usually have 13 protofilaments but different protofilament numbers can be found in some organisms and specialized cells. Requires Mg(2+) as cofactor.

The protein resides in the cytoplasm. It localises to the cytoskeleton. Functionally, tubulin is the major constituent of microtubules, a cylinder consisting of laterally associated linear protofilaments composed of alpha- and beta-tubulin heterodimers. Microtubules grow by the addition of GTP-tubulin dimers to the microtubule end, where a stabilizing cap forms. Below the cap, tubulin dimers are in GDP-bound state, owing to GTPase activity of alpha-tubulin. This Ectocarpus variabilis (Brown alga) protein is Tubulin beta-5 chain (TUBB5).